A 120-amino-acid polypeptide reads, in one-letter code: Large ribosomal subunit protein uL18 (120 aa).

The protein belongs to the universal ribosomal protein uL18 family. Part of the 50S ribosomal subunit; part of the 5S rRNA/L5/L18/L25 subcomplex. Contacts the 5S and 23S rRNAs.

Its function is as follows. This is one of the proteins that bind and probably mediate the attachment of the 5S RNA into the large ribosomal subunit, where it forms part of the central protuberance. In Bradyrhizobium sp. (strain BTAi1 / ATCC BAA-1182), this protein is Large ribosomal subunit protein uL18.